Consider the following 119-residue polypeptide: Putative membrane protein insertion efficiency factor (119 aa).

Residues 82 to 119 (NALRGEKGGESAADVPSGGSVSEPPGPAAETSPNAQGA) are disordered.

It belongs to the UPF0161 family.

The protein localises to the cell membrane. Functionally, could be involved in insertion of integral membrane proteins into the membrane. This chain is Putative membrane protein insertion efficiency factor, found in Streptomyces griseus subsp. griseus (strain JCM 4626 / CBS 651.72 / NBRC 13350 / KCC S-0626 / ISP 5235).